The sequence spans 383 residues: Putative glutamate--cysteine ligase 2 (383 aa).

It belongs to the glutamate--cysteine ligase type 2 family. YbdK subfamily.

The catalysed reaction is L-cysteine + L-glutamate + ATP = gamma-L-glutamyl-L-cysteine + ADP + phosphate + H(+). Functionally, ATP-dependent carboxylate-amine ligase which exhibits weak glutamate--cysteine ligase activity. The chain is Putative glutamate--cysteine ligase 2 from Clavibacter michiganensis subsp. michiganensis (strain NCPPB 382).